We begin with the raw amino-acid sequence, 95 residues long: Small ribosomal subunit protein uS19 (95 aa).

Belongs to the universal ribosomal protein uS19 family.

Functionally, protein S19 forms a complex with S13 that binds strongly to the 16S ribosomal RNA. The protein is Small ribosomal subunit protein uS19 of Chloroflexus aurantiacus (strain ATCC 29366 / DSM 635 / J-10-fl).